Reading from the N-terminus, the 311-residue chain is DNA-directed RNA polymerase subunit alpha (311 aa).

Residues 1–228 are alpha N-terminal domain (alpha-NTD); sequence MQYQIERIDH…ELFQPLATVT (228 aa). The interval 239-311 is alpha C-terminal domain (alpha-CTD); that stretch reads PSPEAQIPLE…ISIPQSRTSV (73 aa).

It belongs to the RNA polymerase alpha chain family. In cyanobacteria the RNAP catalytic core is composed of 2 alpha, 1 beta, 1 beta', 1 gamma and 1 omega subunit. When a sigma factor is associated with the core the holoenzyme is formed, which can initiate transcription.

It catalyses the reaction RNA(n) + a ribonucleoside 5'-triphosphate = RNA(n+1) + diphosphate. DNA-dependent RNA polymerase catalyzes the transcription of DNA into RNA using the four ribonucleoside triphosphates as substrates. This is DNA-directed RNA polymerase subunit alpha from Prochlorococcus marinus (strain MIT 9312).